The chain runs to 100 residues: Urease subunit gamma (100 aa).

The protein belongs to the urease gamma subunit family. As to quaternary structure, heterotrimer of UreA (gamma), UreB (beta) and UreC (alpha) subunits. Three heterotrimers associate to form the active enzyme.

The protein resides in the cytoplasm. It carries out the reaction urea + 2 H2O + H(+) = hydrogencarbonate + 2 NH4(+). It functions in the pathway nitrogen metabolism; urea degradation; CO(2) and NH(3) from urea (urease route): step 1/1. This is Urease subunit gamma from Burkholderia multivorans (strain ATCC 17616 / 249).